A 100-amino-acid chain; its full sequence is Integration host factor subunit alpha (100 aa).

Belongs to the bacterial histone-like protein family. In terms of assembly, heterodimer of an alpha and a beta chain.

Its function is as follows. This protein is one of the two subunits of integration host factor, a specific DNA-binding protein that functions in genetic recombination as well as in transcriptional and translational control. The protein is Integration host factor subunit alpha of Methylobacillus flagellatus (strain ATCC 51484 / DSM 6875 / VKM B-1610 / KT).